Consider the following 640-residue polypeptide: Protein ALTERED PHOSPHATE STARVATION RESPONSE 1 (640 aa).

The segment at 60–175 (TPLHLHHNPP…ATPQASSVVS (116 aa)) is disordered. The segment covering 68-87 (PPSPSPPPPPPPRPPPPPLS) has biased composition (pro residues). The span at 88–103 (PGSETTTWTTTTTSSV) shows a compositional bias: low complexity. Residues 104-118 (LPPPPPPPPPPPPPS) show a composition bias toward pro residues. Low complexity predominate over residues 144-173 (TTATRTATGTGSDAAVTTAPTTATPQASSV). Residues 336-371 (KTEKAKKDVEKLESQLSVSSQAIQSASNEIIKLRET) are a coiled coil.

In terms of tissue distribution, expressed in the root tip of primary and lateral roots, specifically in the meristematic region, including the quiescent center and lateral root cap cells.

The protein resides in the nucleus. Its function is as follows. Required for the coordination of cell differentiation and cell elongation in the root tip. Required for the coordination of cell processes necessary for correct root growth in response to phosphate starvation, through the modulation of the auxin transporter protein PIN7. This is Protein ALTERED PHOSPHATE STARVATION RESPONSE 1 from Arabidopsis thaliana (Mouse-ear cress).